Consider the following 543-residue polypeptide: Chaperonin GroEL (543 aa).

ATP-binding positions include 29–32, 86–90, Gly413, 477–479, and Asp493; these read TLGP, DGTTT, and DAL.

Belongs to the chaperonin (HSP60) family. As to quaternary structure, forms a cylinder of 14 subunits composed of two heptameric rings stacked back-to-back. Interacts with the co-chaperonin GroES.

It is found in the cytoplasm. The catalysed reaction is ATP + H2O + a folded polypeptide = ADP + phosphate + an unfolded polypeptide.. Its function is as follows. Together with its co-chaperonin GroES, plays an essential role in assisting protein folding. The GroEL-GroES system forms a nano-cage that allows encapsulation of the non-native substrate proteins and provides a physical environment optimized to promote and accelerate protein folding. The sequence is that of Chaperonin GroEL from Clostridium botulinum.